The chain runs to 476 residues: NADH-quinone oxidoreductase subunit N (476 aa).

14 helical membrane passes run 8–28 (ITTE…GLLV), 35–55 (GLGS…IINW), 71–91 (YATF…LGSF), 102–122 (FEYY…ASAG), 124–144 (FITL…LVAF), 159–179 (ILLA…VYGA), 201–221 (LIVG…AVPF), 239–259 (FLAV…FAGG), 267–287 (WTLL…LVAI), 295–315 (MLAY…VSAT), 322–342 (VMFY…VVAI), 366–386 (ASVM…AGFV), 405–425 (LGLI…LVMF), and 437–457 (VGGA…ILGI).

The protein belongs to the complex I subunit 2 family. NDH-1 is composed of 14 different subunits. Subunits NuoA, H, J, K, L, M, N constitute the membrane sector of the complex.

The protein resides in the cell membrane. It catalyses the reaction a quinone + NADH + 5 H(+)(in) = a quinol + NAD(+) + 4 H(+)(out). Functionally, NDH-1 shuttles electrons from NADH, via FMN and iron-sulfur (Fe-S) centers, to quinones in the respiratory chain. The immediate electron acceptor for the enzyme in this species is believed to be a menaquinone. Couples the redox reaction to proton translocation (for every two electrons transferred, four hydrogen ions are translocated across the cytoplasmic membrane), and thus conserves the redox energy in a proton gradient. The protein is NADH-quinone oxidoreductase subunit N of Desulforamulus reducens (strain ATCC BAA-1160 / DSM 100696 / MI-1) (Desulfotomaculum reducens).